The primary structure comprises 359 residues: Peptide chain release factor 1 (359 aa).

Position 236 is an N5-methylglutamine (glutamine 236).

This sequence belongs to the prokaryotic/mitochondrial release factor family. Methylated by PrmC. Methylation increases the termination efficiency of RF1.

Its subcellular location is the cytoplasm. Its function is as follows. Peptide chain release factor 1 directs the termination of translation in response to the peptide chain termination codons UAG and UAA. The chain is Peptide chain release factor 1 from Streptococcus pneumoniae serotype 4 (strain ATCC BAA-334 / TIGR4).